A 203-amino-acid chain; its full sequence is Large ribosomal subunit protein bL25 (203 aa).

A disordered region spans residues 1–21 (MMENLQVNQREKKTRHSSRQC). Positions 12–21 (KKTRHSSRQC) are enriched in basic residues.

It belongs to the bacterial ribosomal protein bL25 family. CTC subfamily. Part of the 50S ribosomal subunit; part of the 5S rRNA/L5/L18/L25 subcomplex. Contacts the 5S rRNA. Binds to the 5S rRNA independently of L5 and L18.

Functionally, this is one of the proteins that binds to the 5S RNA in the ribosome where it forms part of the central protuberance. This Clostridium perfringens (strain 13 / Type A) protein is Large ribosomal subunit protein bL25.